The following is a 187-amino-acid chain: Photosystem I assembly protein Ycf4 (187 aa).

Transmembrane regions (helical) follow at residues Y25–L47 and F62–W84.

Belongs to the Ycf4 family.

Its subcellular location is the plastid. The protein resides in the chloroplast thylakoid membrane. Functionally, seems to be required for the assembly of the photosystem I complex. This Mesostigma viride (Green alga) protein is Photosystem I assembly protein Ycf4.